We begin with the raw amino-acid sequence, 476 residues long: Bifunctional protein HldE (476 aa).

Residues 1 to 318 (MKVTLPDFRR…ENAIRGRAET (318 aa)) form a ribokinase region. Residue 195 to 198 (NLSE) participates in ATP binding. Residue aspartate 264 is part of the active site. The tract at residues 344–476 (MTNGIFDILH…IIQSIKNGRG (133 aa)) is cytidylyltransferase.

In the N-terminal section; belongs to the carbohydrate kinase PfkB family. This sequence in the C-terminal section; belongs to the cytidylyltransferase family. As to quaternary structure, homodimer.

It catalyses the reaction D-glycero-beta-D-manno-heptose 7-phosphate + ATP = D-glycero-beta-D-manno-heptose 1,7-bisphosphate + ADP + H(+). The enzyme catalyses D-glycero-beta-D-manno-heptose 1-phosphate + ATP + H(+) = ADP-D-glycero-beta-D-manno-heptose + diphosphate. It functions in the pathway nucleotide-sugar biosynthesis; ADP-L-glycero-beta-D-manno-heptose biosynthesis; ADP-L-glycero-beta-D-manno-heptose from D-glycero-beta-D-manno-heptose 7-phosphate: step 1/4. The protein operates within nucleotide-sugar biosynthesis; ADP-L-glycero-beta-D-manno-heptose biosynthesis; ADP-L-glycero-beta-D-manno-heptose from D-glycero-beta-D-manno-heptose 7-phosphate: step 3/4. Its function is as follows. Catalyzes the phosphorylation of D-glycero-D-manno-heptose 7-phosphate at the C-1 position to selectively form D-glycero-beta-D-manno-heptose-1,7-bisphosphate. Functionally, catalyzes the ADP transfer from ATP to D-glycero-beta-D-manno-heptose 1-phosphate, yielding ADP-D-glycero-beta-D-manno-heptose. This Yersinia pestis bv. Antiqua (strain Antiqua) protein is Bifunctional protein HldE.